Consider the following 1287-residue polypeptide: Rho GTPase-activating protein 33 (1287 aa).

A disordered region spans residues 1-40 (MVARSTDSLDGPGEGSVQPLPTAGGPSVKGKPGKRLSAPR). A Phosphoserine modification is found at Ser8. Residues 59-168 (FGHIQLLLSP…CGPVLTWMEL (110 aa)) enclose the PX; atypical domain. The 63-residue stretch at 186 to 248 (PAVAAAHVIK…PSECVELFTE (63 aa)) folds into the SH3 domain. Residues 315–510 (CDLGEHLSNS…FLLTHVDVLF (196 aa)) form the Rho-GAP domain. Disordered regions lie at residues 551 to 792 (RTQG…SPAA), 813 to 832 (AGGA…GRSL), 859 to 1030 (KLRG…VPTP), 1056 to 1075 (GPPS…SLGP), 1090 to 1134 (GASE…SPDF), and 1146 to 1287 (PPDH…RSYC). Positions 558-571 (TPTEPTTPKAPASP) are enriched in low complexity. Ser570 is subject to Phosphoserine. Basic and acidic residues predominate over residues 572–584 (AERRKGERGEKQR). Over residues 622–645 (SGSRPDTVTLRSAKSEESLSSQAS) the composition is skewed to polar residues. The residue at position 636 (Ser636) is a Phosphoserine. Residues 672-709 (AGSCESLSSSSSSESSSSESSSSSSESSAAGLGALSGS) show a composition bias toward low complexity. Position 727 is a phosphoserine (Ser727). Over residues 752–766 (PGDPAPPASPAPPAP) the composition is skewed to pro residues. 2 stretches are compositionally biased toward low complexity: residues 813-829 (AGGA…LSPG) and 896-919 (PARL…SQQE). Polar residues-rich tracts occupy residues 972–981 (RQQSDGSLLR) and 1019–1028 (SPCSVPSQVP). At Tyr1169 the chain carries Phosphotyrosine. Over residues 1175–1189 (GPRGPSPASSSSSSP) the composition is skewed to low complexity. At Arg1244 the chain carries Omega-N-methylarginine. Polar residues predominate over residues 1274–1287 (SWSLHSEGQTRSYC).

It belongs to the PX domain-containing GAP family. Specifically interacts with CDC42 and RHOQ/TC10 through its Rho-GAP domain. Interacts with NEK6.

Functionally, may be involved in several stages of intracellular trafficking. Could play an important role in the regulation of glucose transport by insulin. May act as a downstream effector of RHOQ/TC10 in the regulation of insulin-stimulated glucose transport. The protein is Rho GTPase-activating protein 33 (ARHGAP33) of Homo sapiens (Human).